A 203-amino-acid polypeptide reads, in one-letter code: Superoxide dismutase [Mn] (203 aa).

The Mn(2+) site is built by His27, His81, Asp164, and His168.

It belongs to the iron/manganese superoxide dismutase family. As to quaternary structure, homodimer. The cofactor is Mn(2+).

It carries out the reaction 2 superoxide + 2 H(+) = H2O2 + O2. In terms of biological role, destroys superoxide anion radicals which are normally produced within the cells and which are toxic to biological systems. Partially complements double sodA-sodB deletions in E.coli. This chain is Superoxide dismutase [Mn], found in Pseudomonas aeruginosa (strain ATCC 15692 / DSM 22644 / CIP 104116 / JCM 14847 / LMG 12228 / 1C / PRS 101 / PAO1).